Consider the following 547-residue polypeptide: MFS-type transporter M6 (547 aa).

Residues methionine 1–lysine 45 are disordered. The helical transmembrane segment at valine 81–proline 101 threads the bilayer. N-linked (GlcNAc...) asparagine glycosylation is present at asparagine 118. A helical transmembrane segment spans residues proline 146–asparagine 166. Residue asparagine 167 is glycosylated (N-linked (GlcNAc...) asparagine). 2 helical membrane-spanning segments follow: residues leucine 206–leucine 226 and valine 236–glycine 256. N-linked (GlcNAc...) asparagine glycosylation occurs at asparagine 274. Helical transmembrane passes span phenylalanine 317–leucine 337, tyrosine 347–tyrosine 367, leucine 407–glutamine 427, alanine 432–methionine 452, and alanine 469–valine 489. An N-linked (GlcNAc...) asparagine glycan is attached at asparagine 493. A helical transmembrane segment spans residues alanine 496–leucine 516.

This sequence belongs to the major facilitator superfamily. CAR1 family.

It localises to the membrane. Its function is as follows. MFS-type transporter; part of the gene cluster that mediates the biosynthesis of squalestatin S1 (SQS1, also known as zaragozic acid A), a heavily oxidized fungal polyketide that offers potent cholesterol lowering activity by targeting squalene synthase (SS). The chain is MFS-type transporter M6 from Phoma sp. (strain ATCC 20986 / MF5453).